We begin with the raw amino-acid sequence, 311 residues long: Methionyl-tRNA formyltransferase (311 aa).

A (6S)-5,6,7,8-tetrahydrofolate-binding site is contributed by 112-115 (SLLP).

It belongs to the Fmt family.

The catalysed reaction is L-methionyl-tRNA(fMet) + (6R)-10-formyltetrahydrofolate = N-formyl-L-methionyl-tRNA(fMet) + (6S)-5,6,7,8-tetrahydrofolate + H(+). Its function is as follows. Attaches a formyl group to the free amino group of methionyl-tRNA(fMet). The formyl group appears to play a dual role in the initiator identity of N-formylmethionyl-tRNA by promoting its recognition by IF2 and preventing the misappropriation of this tRNA by the elongation apparatus. This Geobacter metallireducens (strain ATCC 53774 / DSM 7210 / GS-15) protein is Methionyl-tRNA formyltransferase.